Here is a 277-residue protein sequence, read N- to C-terminus: Photosystem I assembly factor PSA3, chloroplastic (277 aa).

The transit peptide at 1-45 (MVVVTHISTSFHQISPSFFHLRLRNPSTTSSSRPKLDGGFALSIR) directs the protein to the chloroplast.

Interacts with PYG7.

The protein localises to the plastid. It localises to the chloroplast. It is found in the chloroplast thylakoid membrane. Its function is as follows. Nuclear genome-encoded factor required for the accumulation of photosystem I (PSI). Functions as a PSI biogenesis factor. Cooperates with PYG7 to promote the stable assembly of PSI in the thylakoid membrane. May target primarily the PsaC subunit. Does not seem to be required for the expression of chloroplast genes encoding PSI subunits. This chain is Photosystem I assembly factor PSA3, chloroplastic, found in Arabidopsis thaliana (Mouse-ear cress).